Reading from the N-terminus, the 67-residue chain is MDIADIESRSSQELHEILVNLRKEFVNLVFQKKLGQCNNISRFSLIRKSIARILTTLNKRRREEKNA.

The protein belongs to the universal ribosomal protein uL29 family.

In Wolbachia sp. subsp. Drosophila simulans (strain wRi), this protein is Large ribosomal subunit protein uL29.